The primary structure comprises 151 residues: MASMQKRLQKELLALQNEPPPGMTLNEKSVQNSITQWIVDMEGAPGTLYEGEKFQLLFKFSSRYPFDSPQVMFTGDNIPVHPHVYSNGHICLSILTEDWSPALSVQSVCLSIISMLSSCKEKRRPPDNSFYVRTCNKNPKKTKWWYHDDTC.

Residues Ser-3–Cys-151 enclose the UBC core domain. The active-site Glycyl thioester intermediate is the Cys-91.

The protein belongs to the ubiquitin-conjugating enzyme family.

It is found in the nucleus. The enzyme catalyses S-ubiquitinyl-[E1 ubiquitin-activating enzyme]-L-cysteine + [E2 ubiquitin-conjugating enzyme]-L-cysteine = [E1 ubiquitin-activating enzyme]-L-cysteine + S-ubiquitinyl-[E2 ubiquitin-conjugating enzyme]-L-cysteine.. It carries out the reaction S-ubiquitinyl-[E1 ubiquitin-activating enzyme]-L-cysteine + [acceptor protein]-N-terminal-amino acid = [E1 ubiquitin-activating enzyme]-L-cysteine + N-terminal-ubiquitinyl-[acceptor protein].. It participates in protein modification; protein ubiquitination. In terms of biological role, accepts ubiquitin from the E1 complex and catalyzes its covalent attachment to other proteins. Catalyzes monoubiquitination. Involved in degradation of misfolded chaperone substrate and DNA repair. This is Ubiquitin-conjugating enzyme E2 W (ube2w) from Xenopus tropicalis (Western clawed frog).